The primary structure comprises 259 residues: Type III pantothenate kinase (259 aa).

Residue 6-13 (DVGNTNIV) coordinates ATP. Residues Y100 and 107–110 (GADR) each bind substrate. The Proton acceptor role is filled by D109. K(+) is bound at residue D129. T132 lines the ATP pocket. Position 184 (T184) interacts with substrate.

The protein belongs to the type III pantothenate kinase family. As to quaternary structure, homodimer. NH4(+) serves as cofactor. K(+) is required as a cofactor.

It localises to the cytoplasm. The enzyme catalyses (R)-pantothenate + ATP = (R)-4'-phosphopantothenate + ADP + H(+). Its pathway is cofactor biosynthesis; coenzyme A biosynthesis; CoA from (R)-pantothenate: step 1/5. Its function is as follows. Catalyzes the phosphorylation of pantothenate (Pan), the first step in CoA biosynthesis. In Clostridium kluyveri (strain NBRC 12016), this protein is Type III pantothenate kinase.